A 121-amino-acid chain; its full sequence is Large ribosomal subunit protein bL12 (121 aa).

This sequence belongs to the bacterial ribosomal protein bL12 family. In terms of assembly, homodimer. Part of the ribosomal stalk of the 50S ribosomal subunit. Forms a multimeric L10(L12)X complex, where L10 forms an elongated spine to which 2 to 4 L12 dimers bind in a sequential fashion. Binds GTP-bound translation factors.

In terms of biological role, forms part of the ribosomal stalk which helps the ribosome interact with GTP-bound translation factors. Is thus essential for accurate translation. The chain is Large ribosomal subunit protein bL12 from Pseudomonas fluorescens (strain SBW25).